The chain runs to 399 residues: Dual specificity mitogen-activated protein kinase kinase 4 (399 aa).

The segment at Met1 to Lys40 is disordered. Ala2 is subject to N-acetylalanine. A compositionally biased stretch (gly residues) spans Ser7–Gly22. A d domain region spans residues Met37–Pro52. Residue Arg58 is modified to Asymmetric dimethylarginine; alternate. Arg58 carries the omega-N-methylarginine; alternate modification. Ser90 is subject to Phosphoserine. In terms of domain architecture, Protein kinase spans Leu102–Ile367. ATP-binding positions include Ile108–Val116 and Lys131. Asp229 serves as the catalytic Proton acceptor. Ser257 bears the Phosphoserine; by MAP3K mark. Position 261 is a phosphothreonine; by MAP3K (Thr261). Residues His364–Gln387 form a DVD domain region.

Belongs to the protein kinase superfamily. STE Ser/Thr protein kinase family. MAP kinase kinase subfamily. As to quaternary structure, interacts with SPAG9. Interacts (via its D domain) with its substrates MAPK8/JNK1, MAPK9/JNK2, MAPK10/JNK3, MAPK11 and MAPK14. Interacts (via its DVD domain) with MAP3Ks activators like MAP3K1/MEKK1 and MAP3K11/MLK3. Interacts with ARRB1, ARRB2 and MAPK8IP3/JIP3. Post-translationally, activated by phosphorylation on Ser-257 and Thr-261 by MAP kinase kinase kinases (MAP3Ks). As to expression, abundant expression is seen in the skeletal muscle. It is also widely expressed in other tissues.

The protein resides in the cytoplasm. It is found in the nucleus. It catalyses the reaction L-seryl-[protein] + ATP = O-phospho-L-seryl-[protein] + ADP + H(+). The catalysed reaction is L-threonyl-[protein] + ATP = O-phospho-L-threonyl-[protein] + ADP + H(+). The enzyme catalyses L-tyrosyl-[protein] + ATP = O-phospho-L-tyrosyl-[protein] + ADP + H(+). Activated in response to a variety of cellular stresses, including UV and gamma-irradiation, heat shock, hyperosmolarity, T-cell receptor stimulation, peroxide and inflammatory cytokines. Also activated by developmental cues. MAP2K4/MKK4 is activated by the majority of MKKKs, such as MAP3K5/ASK1, MAP3K1/MEKK1, MAP3K7/TAK1, MAP3K10/MLK2, MAP3K11/MLK3, MAP3K12/DLK and MAP3K13/LZK. Its function is as follows. Dual specificity protein kinase which acts as an essential component of the MAP kinase signal transduction pathway. Essential component of the stress-activated protein kinase/c-Jun N-terminal kinase (SAP/JNK) signaling pathway. With MAP2K7/MKK7, is the one of the only known kinase to directly activate the stress-activated protein kinase/c-Jun N-terminal kinases MAPK8/JNK1, MAPK9/JNK2 and MAPK10/JNK3. MAP2K4/MKK4 and MAP2K7/MKK7 both activate the JNKs by phosphorylation, but they differ in their preference for the phosphorylation site in the Thr-Pro-Tyr motif. MAP2K4 shows preference for phosphorylation of the Tyr residue and MAP2K7/MKK7 for the Thr residue. The phosphorylation of the Thr residue by MAP2K7/MKK7 seems to be the prerequisite for JNK activation at least in response to pro-inflammatory cytokines, while other stimuli activate both MAP2K4/MKK4 and MAP2K7/MKK7 which synergistically phosphorylate JNKs. MAP2K4 is required for maintaining peripheral lymphoid homeostasis. The MKK/JNK signaling pathway is also involved in mitochondrial death signaling pathway, including the release cytochrome c, leading to apoptosis. Whereas MAP2K7/MKK7 exclusively activates JNKs, MAP2K4/MKK4 additionally activates the p38 MAPKs MAPK11, MAPK12, MAPK13 and MAPK14. The protein is Dual specificity mitogen-activated protein kinase kinase 4 (MAP2K4) of Homo sapiens (Human).